The primary structure comprises 134 residues: Waprin-Phi1 (134 aa).

Positions 1 to 23 are cleaved as a signal peptide; it reads MTLRRGSCPLLLFSLVGLLTTCA. 2 WAP domains span residues 36 to 82 and 83 to 133; these read VAEK…SCQI and PDEK…TTAR. Disulfide bonds link C43/C72, C55/C76, C59/C71, C65/C80, C90/C120, C103/C124, C107/C119, and C113/C129.

Belongs to the venom waprin family. Expressed by the venom gland.

Its subcellular location is the secreted. Damages membranes of susceptible bacteria. Has no hemolytic activity. Not toxic to mice. Does not inhibit the proteinases elastase and cathepsin G. This is Waprin-Phi1 from Philodryas olfersii (Green snake).